Consider the following 176-residue polypeptide: Retinol-binding protein 4-A (176 aa).

Residue S1 is modified to N-acetylserine. 3 disulfide bridges follow: C3–C159, C69–C173, and C119–C128. A substrate-binding site is contributed by Q97.

Belongs to the calycin superfamily. Lipocalin family.

It is found in the secreted. RBP delivers retinol from the liver stores to the peripheral tissues. In plasma, the RBP-retinol complex interacts with transthyretin, this prevents its loss by filtration through the kidney glomeruli. The sequence is that of Retinol-binding protein 4-A (rbp4a) from Oncorhynchus mykiss (Rainbow trout).